The sequence spans 364 residues: CCA-adding enzyme (364 aa).

The ATP site is built by G19 and R22. Positions 19 and 22 each coordinate CTP. Mg(2+)-binding residues include D32 and D34. Residues R102, R148, and R151 each coordinate ATP. CTP contacts are provided by R102, R148, and R151.

The protein belongs to the tRNA nucleotidyltransferase/poly(A) polymerase family. Bacterial CCA-adding enzyme type 2 subfamily. Mg(2+) serves as cofactor.

The enzyme catalyses a tRNA precursor + 2 CTP + ATP = a tRNA with a 3' CCA end + 3 diphosphate. It catalyses the reaction a tRNA with a 3' CCA end + 2 CTP + ATP = a tRNA with a 3' CCACCA end + 3 diphosphate. Its function is as follows. Catalyzes the addition and repair of the essential 3'-terminal CCA sequence in tRNAs without using a nucleic acid template. Adds these three nucleotides in the order of C, C, and A to the tRNA nucleotide-73, using CTP and ATP as substrates and producing inorganic pyrophosphate. tRNA 3'-terminal CCA addition is required both for tRNA processing and repair. Also involved in tRNA surveillance by mediating tandem CCA addition to generate a CCACCA at the 3' terminus of unstable tRNAs. While stable tRNAs receive only 3'-terminal CCA, unstable tRNAs are marked with CCACCA and rapidly degraded. The chain is CCA-adding enzyme from Bordetella bronchiseptica (strain ATCC BAA-588 / NCTC 13252 / RB50) (Alcaligenes bronchisepticus).